Reading from the N-terminus, the 465-residue chain is Glutamate--tRNA ligase (465 aa).

The 'HIGH' region signature appears at 11–21 (PSPTGFIHLGN). Residues 118 to 139 (GEKPRYDGTWRPAPGKILPPPP) form a disordered region. Positions 243–247 (KMSKR) match the 'KMSKS' region motif. Lysine 246 is a binding site for ATP.

The protein belongs to the class-I aminoacyl-tRNA synthetase family. Glutamate--tRNA ligase type 1 subfamily. Monomer.

It is found in the cytoplasm. The enzyme catalyses tRNA(Glu) + L-glutamate + ATP = L-glutamyl-tRNA(Glu) + AMP + diphosphate. Functionally, catalyzes the attachment of glutamate to tRNA(Glu) in a two-step reaction: glutamate is first activated by ATP to form Glu-AMP and then transferred to the acceptor end of tRNA(Glu). This chain is Glutamate--tRNA ligase, found in Ralstonia pickettii (strain 12J).